Here is a 490-residue protein sequence, read N- to C-terminus: uncharacterized protein (490 aa).

Positions 1–19 are cleaved as a signal peptide; sequence MSITSVSLYVYLICAGGHA.

Belongs to the mimivirus L137 family.

This is an uncharacterized protein from Acanthamoeba polyphaga (Amoeba).